A 501-amino-acid chain; its full sequence is ATP synthase subunit alpha (501 aa).

169–176 (GDRQTGKT) contributes to the ATP binding site.

The protein belongs to the ATPase alpha/beta chains family. As to quaternary structure, F-type ATPases have 2 components, CF(1) - the catalytic core - and CF(0) - the membrane proton channel. CF(1) has five subunits: alpha(3), beta(3), gamma(1), delta(1), epsilon(1). CF(0) has three main subunits: a(1), b(2) and c(9-12). The alpha and beta chains form an alternating ring which encloses part of the gamma chain. CF(1) is attached to CF(0) by a central stalk formed by the gamma and epsilon chains, while a peripheral stalk is formed by the delta and b chains.

The protein localises to the cell membrane. It carries out the reaction ATP + H2O + 4 H(+)(in) = ADP + phosphate + 5 H(+)(out). In terms of biological role, produces ATP from ADP in the presence of a proton gradient across the membrane. The alpha chain is a regulatory subunit. The polypeptide is ATP synthase subunit alpha (Streptococcus gordonii (strain Challis / ATCC 35105 / BCRC 15272 / CH1 / DL1 / V288)).